Here is a 775-residue protein sequence, read N- to C-terminus: E3 ubiquitin-protein ligase UHRF1 (775 aa).

The 77-residue stretch at 1–77 folds into the Ubiquitin-like domain; that stretch reads MWIQVRTMDG…IVQLLVRQIP (77 aa). The disordered stretch occupies residues 81–128; it reads PTKDKECGISDADSGCGSGQGESDKNSSCGEGATDVDGQPAGINSENV. Tudor-like regions lie at residues 131-207 and 214-283; these read SLYK…LRAR and DLKV…IEEP. The tract at residues 293-301 is linker; that stretch reads PQKRQNGPE. The segment at 299–366 adopts a PHD-type zinc-finger fold; sequence GPECKHCKDN…DWYCPDCRND (68 aa). Histone H3R2me0 binding regions lie at residues 333 to 337 and 353 to 355; these read CDECD and PQD. A YDG domain is found at 419–582; that stretch reads GPIPGVPVGT…FLVWRYLLRR (164 aa). Residues 445–446 form a required to promote base flipping region; that stretch reads HV. Residues 463–464 and D469 contribute to the DNA site; that span reads AG. Required for formation of a 5-methylcytosine-binding pocket regions lie at residues 466–469 and 478–481; these read YEDD and YTGS. Positions 616-628 are enriched in basic and acidic residues; that stretch reads ASKEREKENKTED. Residues 616 to 655 form a disordered region; the sequence is ASKEREKENKTEDELSESPSKGKRKRNSAGSGLSDAKSTP. The RING-type zinc-finger motif lies at 706 to 745; the sequence is CICCQEVVYEPITTECHHNICKGCLDRSFKALVHNCPACR.

The protein resides in the nucleus. The enzyme catalyses S-ubiquitinyl-[E2 ubiquitin-conjugating enzyme]-L-cysteine + [acceptor protein]-L-lysine = [E2 ubiquitin-conjugating enzyme]-L-cysteine + N(6)-ubiquitinyl-[acceptor protein]-L-lysine.. It participates in protein modification; protein ubiquitination. Its function is as follows. Multidomain protein that acts as a key epigenetic regulator by bridging DNA methylation and chromatin modification. Specifically recognizes and binds hemimethylated DNA at replication forks via its YDG domain and recruits dnmt1 methyltransferase to ensure faithful propagation of the DNA methylation patterns through DNA replication. In addition to its role in maintenance of DNA methylation, also plays a key role in chromatin modification: through its tudor-like regions and PHD-type zinc fingers, specifically recognizes and binds histone H3 trimethylated at 'Lys-9' (H3K9me3) and unmethylated at 'Arg-2' (H3R2me0), respectively, and recruits chromatin proteins. Enriched in pericentric heterochromatin where it recruits different chromatin modifiers required for this chromatin replication. Also localizes to euchromatic regions where it negatively regulates transcription possibly by impacting DNA methylation and histone modifications. Has E3 ubiquitin-protein ligase activity by mediating the ubiquitination of target proteins. However, it is still unclear how E3 ubiquitin-protein ligase activity is related to its role in chromatin in vivo. This chain is E3 ubiquitin-protein ligase UHRF1 (uhrf1), found in Xenopus tropicalis (Western clawed frog).